Reading from the N-terminus, the 366-residue chain is Protein sigma-NS (366 aa).

The tract at residues 1–11 is important for ssRNA-binding and formation of complexes; sequence MASSLRAAISK.

This sequence belongs to the orthoreovirus sigma-NS protein family. As to quaternary structure, homooligomer; in presence of RNA. Interacts with protein mu-NS; this interaction allows the localization of sigma-NS to the viral factories. Interacts with host G3BP1 (via C-terminus); this interaction induces the relocalization of G3BP1 and other SG proteins to the viral factories periphery.

It localises to the host cytoplasm. Functionally, protein that binds to ssRNA and participates with protein mu-NS in forming the matrix of viral factories, which are large inclusions in the host cytoplasm where replication intermediates are assembled and viral RNA replication takes place. Plays a role in the inhibition of the integrated stress response (ISR) to escape from host cell translational shutoff. Participates in the disruption of stress granules (SG) through its association with host G3BP1 and mu-NS. This is Protein sigma-NS (S3) from Mammalia (T3D).